The following is a 333-amino-acid chain: Complement C1q and tumor necrosis factor-related protein 9A (333 aa).

Residues 1 to 19 (MRIWWLLLAIEICTGNINS) form the signal peptide. Collagen-like domains lie at 24-82 (RQGH…DGKV), 95-154 (GSPG…PGPM), and 155-191 (GPIG…GEKG). A disordered region spans residues 24 to 188 (RQGHPGIPGN…GIRGWKGDRG (165 aa)). Low complexity predominate over residues 26-40 (GHPGIPGNPGHNGLP). Pro31, Pro34, and Pro40 each carry 4-hydroxyproline. Residues 42-57 (RDGRDGAKGDKGDAGE) show a composition bias toward basic and acidic residues. Pro58, Pro61, and Pro64 each carry 4-hydroxyproline. Residues 69-88 (TSGEKGERGADGKVEAKGIK) show a composition bias toward basic and acidic residues. Residues Lys73 and Lys127 each carry the 5-hydroxylysine modification. Residues Lys73 and Lys127 are each glycosylated (O-linked (Gal...) hydroxylysine). 4-hydroxyproline occurs at positions 151, 160, and 175. The C1q domain maps to 197 to 333 (LVLPKSAFTV…FTGFLLFSSP (137 aa)).

Multimers (predominantly trimers). Interacts with ADIPOQ via the C1q domain to form a heterotrimeric complex. Interacts with CTRP9B. Forms heterotrimers and heterooligomeric complexes with CTRP9B. As to expression, expressed predominantly in adipose tissue.

Its subcellular location is the secreted. Probable adipokine. Activates AMPK, AKT, and p44/42 MAPK signaling pathways. This is Complement C1q and tumor necrosis factor-related protein 9A (C1QTNF9) from Homo sapiens (Human).